The primary structure comprises 545 residues: Chaperonin GroEL 1 (545 aa).

ATP-binding positions include T29–P32, D86–T90, G413, N477–A479, and D493.

The protein belongs to the chaperonin (HSP60) family. Forms a cylinder of 14 subunits composed of two heptameric rings stacked back-to-back. Interacts with the co-chaperonin GroES.

It is found in the cytoplasm. The enzyme catalyses ATP + H2O + a folded polypeptide = ADP + phosphate + an unfolded polypeptide.. Functionally, together with its co-chaperonin GroES, plays an essential role in assisting protein folding. The GroEL-GroES system forms a nano-cage that allows encapsulation of the non-native substrate proteins and provides a physical environment optimized to promote and accelerate protein folding. The polypeptide is Chaperonin GroEL 1 (Arthrobacter sp. (strain FB24)).